Reading from the N-terminus, the 472-residue chain is 3-isopropylmalate dehydratase large subunit (472 aa).

Residues cysteine 353, cysteine 414, and cysteine 417 each coordinate [4Fe-4S] cluster.

Belongs to the aconitase/IPM isomerase family. LeuC type 1 subfamily. As to quaternary structure, heterodimer of LeuC and LeuD. [4Fe-4S] cluster serves as cofactor.

The enzyme catalyses (2R,3S)-3-isopropylmalate = (2S)-2-isopropylmalate. It participates in amino-acid biosynthesis; L-leucine biosynthesis; L-leucine from 3-methyl-2-oxobutanoate: step 2/4. In terms of biological role, catalyzes the isomerization between 2-isopropylmalate and 3-isopropylmalate, via the formation of 2-isopropylmaleate. This chain is 3-isopropylmalate dehydratase large subunit, found in Psychrobacter arcticus (strain DSM 17307 / VKM B-2377 / 273-4).